An 857-amino-acid polypeptide reads, in one-letter code: Protein translocase subunit SecA (857 aa).

ATP is bound by residues glutamine 88, glycine 106 to threonine 110, and aspartate 496. Residues cysteine 833, cysteine 835, cysteine 844, and cysteine 845 each coordinate Zn(2+).

The protein belongs to the SecA family. In terms of assembly, monomer and homodimer. Part of the essential Sec protein translocation apparatus which comprises SecA, SecYEG and auxiliary proteins SecDF-YajC and YidC. Zn(2+) serves as cofactor.

It localises to the cell inner membrane. The protein localises to the cytoplasm. The enzyme catalyses ATP + H2O + cellular proteinSide 1 = ADP + phosphate + cellular proteinSide 2.. Its function is as follows. Part of the Sec protein translocase complex. Interacts with the SecYEG preprotein conducting channel. Has a central role in coupling the hydrolysis of ATP to the transfer of proteins into and across the cell membrane, serving as an ATP-driven molecular motor driving the stepwise translocation of polypeptide chains across the membrane. This is Protein translocase subunit SecA from Sulfurimonas denitrificans (strain ATCC 33889 / DSM 1251) (Thiomicrospira denitrificans (strain ATCC 33889 / DSM 1251)).